Consider the following 1014-residue polypeptide: Endogenous retrovirus group K member 10 Pol protein (1014 aa).

Residues 57–245 form the Reverse transcriptase domain; it reads LEKGHIEPSF…TPFHYLGMQI (189 aa). The short motif at 161-164 is the LPQG element; sequence LPQG. The YXDD signature appears at 195–198; the sequence is YIDD. The RNase H type-1 domain occupies 460 to 590; that stretch reads LENALTVFTD…ADLLVSSALI (131 aa). Residues D469, E497, D517, and D582 each coordinate Mg(2+). The Integrase-type zinc-finger motif lies at 587 to 628; the sequence is SALIKAQELHALTHVNAAGLKNKFDVTWKQAKDIVQHCTQCQ. Zn(2+) is bound by residues H596, H600, C624, and C627. An Integrase catalytic domain is found at 642-803; it reads RGLCPNALWQ…TSAEQHLTGK (162 aa). The integrase-type DNA-binding region spans 811-859; it reads KLIWWKDNKNKTWEIGKVITWGRGFACVSPGENQLPVWLPTRHLKFYNE.

Belongs to the beta type-B retroviral polymerase family. HERV class-II K(HML-2) pol subfamily.

The enzyme catalyses DNA(n) + a 2'-deoxyribonucleoside 5'-triphosphate = DNA(n+1) + diphosphate. The catalysed reaction is Endonucleolytic cleavage to 5'-phosphomonoester.. In terms of biological role, early post-infection, the reverse transcriptase converts the viral RNA genome into double-stranded viral DNA. The RNase H domain of the reverse transcriptase performs two functions. It degrades the RNA template and specifically removes the RNA primer from the RNA/DNA hybrid. Following nuclear import, the integrase catalyzes the insertion of the linear, double-stranded viral DNA into the host cell chromosome. Endogenous Pol proteins may have kept, lost or modified their original function during evolution. The protein is Endogenous retrovirus group K member 10 Pol protein (ERVK-10) of Homo sapiens (Human).